The sequence spans 247 residues: 5-oxoprolinase subunit A (247 aa).

This sequence belongs to the LamB/PxpA family. In terms of assembly, forms a complex composed of PxpA, PxpB and PxpC.

It catalyses the reaction 5-oxo-L-proline + ATP + 2 H2O = L-glutamate + ADP + phosphate + H(+). Functionally, catalyzes the cleavage of 5-oxoproline to form L-glutamate coupled to the hydrolysis of ATP to ADP and inorganic phosphate. This is 5-oxoprolinase subunit A from Ralstonia pickettii (strain 12J).